Reading from the N-terminus, the 636-residue chain is tRNA 5-methylaminomethyl-2-thiouridine biosynthesis bifunctional protein MnmC (636 aa).

The interval 1–202 (MTVSKILKQV…ERAALRAQSH (202 aa)) is tRNA (mnm(5)s(2)U34)-methyltransferase. The FAD-dependent cmnm(5)s(2)U34 oxidoreductase stretch occupies residues 227–636 (IGGGVASACL…GKALEMSGKS (410 aa)).

It in the N-terminal section; belongs to the methyltransferase superfamily. tRNA (mnm(5)s(2)U34)-methyltransferase family. In the C-terminal section; belongs to the DAO family. FAD is required as a cofactor.

It localises to the cytoplasm. It catalyses the reaction 5-aminomethyl-2-thiouridine(34) in tRNA + S-adenosyl-L-methionine = 5-methylaminomethyl-2-thiouridine(34) in tRNA + S-adenosyl-L-homocysteine + H(+). Its function is as follows. Catalyzes the last two steps in the biosynthesis of 5-methylaminomethyl-2-thiouridine (mnm(5)s(2)U) at the wobble position (U34) in tRNA. Catalyzes the FAD-dependent demodification of cmnm(5)s(2)U34 to nm(5)s(2)U34, followed by the transfer of a methyl group from S-adenosyl-L-methionine to nm(5)s(2)U34, to form mnm(5)s(2)U34. This chain is tRNA 5-methylaminomethyl-2-thiouridine biosynthesis bifunctional protein MnmC, found in Shewanella halifaxensis (strain HAW-EB4).